The sequence spans 889 residues: Alanine--tRNA ligase (889 aa).

Zn(2+) contacts are provided by histidine 587, histidine 591, cysteine 691, and histidine 695. Disordered regions lie at residues glutamine 734–lysine 760 and alanine 866–glycine 889. Over residues aspartate 872 to serine 881 the composition is skewed to basic and acidic residues.

It belongs to the class-II aminoacyl-tRNA synthetase family. The cofactor is Zn(2+).

The protein resides in the cytoplasm. The enzyme catalyses tRNA(Ala) + L-alanine + ATP = L-alanyl-tRNA(Ala) + AMP + diphosphate. Catalyzes the attachment of alanine to tRNA(Ala) in a two-step reaction: alanine is first activated by ATP to form Ala-AMP and then transferred to the acceptor end of tRNA(Ala). Also edits incorrectly charged Ser-tRNA(Ala) and Gly-tRNA(Ala) via its editing domain. The protein is Alanine--tRNA ligase of Nitrosopumilus maritimus (strain SCM1).